Here is a 420-residue protein sequence, read N- to C-terminus: MDVDNGEGQVQVHLKTKQEHYAVPDVPYAIDGTVTTVELNTFVNALLRQKDGSSDTEFDFLVFDEYLRGRLCDHLREKAISFEDAIEIEYVERFPAPEPQDCLLHDDWVSAVKARGKWILSGCYDNSLNLWTNKGKHILTISGHTAPIKAVDWISLDEETGRFVSTSQDQTAMLWKWNVGSNAVDCVSVCKGHERGVDSVSVSPDGLRFATGSWDTMLKVWSAELDDGVEGSSKRMKESGVRTPKITLQGHRESVSAVQWMDATTLLTGSWDYTLKVWDLSLEGIKTEISTNKSIFDASYSKLNRLILTASADKNLRLYDPRTNQGSVVRNTYLGHNAWVQTVMWSTTEEFLFVSGAYDNQNKLWDCRSPKAPLYDLLGHGDKVLDIDWSNPKYIVSGGVDNSVRVFKSRKALAEDTETK.

The segment at V10 to E92 is ubiquitin-like (UBL) domain. 7 WD repeats span residues L104 to S142, G143 to D185, G192 to G231, G250 to E288, S290 to V329, G335 to Y375, and G379 to T417.

Belongs to the WD repeat WDR12/YTM1 family.

It is found in the nucleus. It localises to the nucleolus. The protein localises to the nucleoplasm. Its function is as follows. Required for maturation of ribosomal RNAs and formation of the large ribosomal subunit. The sequence is that of Ribosome biogenesis protein WDR12 homolog from Drosophila simulans (Fruit fly).